Here is a 294-residue protein sequence, read N- to C-terminus: Energy-coupling factor transporter ATP-binding protein EcfA1 (294 aa).

One can recognise an ABC transporter domain in the interval Ile-27 to Asp-260. Gly-60–Ser-67 provides a ligand contact to ATP.

This sequence belongs to the ABC transporter superfamily. Energy-coupling factor EcfA family. As to quaternary structure, forms a stable energy-coupling factor (ECF) transporter complex composed of 2 membrane-embedded substrate-binding proteins (S component), 2 ATP-binding proteins (A component) and 2 transmembrane proteins (T component).

It localises to the cell membrane. Functionally, ATP-binding (A) component of a common energy-coupling factor (ECF) ABC-transporter complex. Unlike classic ABC transporters this ECF transporter provides the energy necessary to transport a number of different substrates. In Ureaplasma parvum serovar 3 (strain ATCC 700970), this protein is Energy-coupling factor transporter ATP-binding protein EcfA1.